The following is a 139-amino-acid chain: Small ribosomal subunit protein uS12m (139 aa).

A mitochondrion-targeting transit peptide spans 1–29 (MSWSGLLRGLSMSLNYGLALAPRPWGTRP). The segment at 37–57 (HRRGPPKFPPSKPGPTEGRPQ) is disordered.

The protein belongs to the universal ribosomal protein uS12 family. As to quaternary structure, component of the mitochondrial ribosome small subunit (28S) which comprises a 12S rRNA and about 30 distinct proteins.

It localises to the mitochondrion. The chain is Small ribosomal subunit protein uS12m (MRPS12) from Bos taurus (Bovine).